Reading from the N-terminus, the 460-residue chain is Glycine--tRNA ligase (460 aa).

Residues Arg99 and Glu162 each contribute to the substrate site. ATP contacts are provided by residues 194-196 (RNE), 204-209 (FRTREF), 281-282 (EL), and 325-328 (GVGR). 209 to 213 (FEQME) is a substrate binding site. 321-325 (EPAAG) lines the substrate pocket.

It belongs to the class-II aminoacyl-tRNA synthetase family. In terms of assembly, homodimer.

Its subcellular location is the cytoplasm. The enzyme catalyses tRNA(Gly) + glycine + ATP = glycyl-tRNA(Gly) + AMP + diphosphate. Catalyzes the attachment of glycine to tRNA(Gly). This Streptomyces coelicolor (strain ATCC BAA-471 / A3(2) / M145) protein is Glycine--tRNA ligase.